Reading from the N-terminus, the 122-residue chain is Large ribosomal subunit protein uL14 (122 aa).

The protein belongs to the universal ribosomal protein uL14 family. Part of the 50S ribosomal subunit. Forms a cluster with proteins L3 and L19. In the 70S ribosome, L14 and L19 interact and together make contacts with the 16S rRNA in bridges B5 and B8.

Functionally, binds to 23S rRNA. Forms part of two intersubunit bridges in the 70S ribosome. The protein is Large ribosomal subunit protein uL14 of Acidovorax sp. (strain JS42).